Consider the following 87-residue polypeptide: Translation initiation factor IF-1 2 (87 aa).

One can recognise an S1-like domain in the interval 1–72 (MAKEELLEMQ…SKGRITFRHI (72 aa)).

It belongs to the IF-1 family. In terms of assembly, component of the 30S ribosomal translation pre-initiation complex which assembles on the 30S ribosome in the order IF-2 and IF-3, IF-1 and N-formylmethionyl-tRNA(fMet); mRNA recruitment can occur at any time during PIC assembly.

It localises to the cytoplasm. Its function is as follows. One of the essential components for the initiation of protein synthesis. Stabilizes the binding of IF-2 and IF-3 on the 30S subunit to which N-formylmethionyl-tRNA(fMet) subsequently binds. Helps modulate mRNA selection, yielding the 30S pre-initiation complex (PIC). Upon addition of the 50S ribosomal subunit IF-1, IF-2 and IF-3 are released leaving the mature 70S translation initiation complex. This is Translation initiation factor IF-1 2 from Dechloromonas aromatica (strain RCB).